The chain runs to 160 residues: Transcription elongation factor GreA (160 aa).

Residues 43–76 (LSENAEYDAAREQQRQLENKIGDLESKLTRATIL) adopt a coiled-coil conformation.

The protein belongs to the GreA/GreB family.

Functionally, necessary for efficient RNA polymerase transcription elongation past template-encoded arresting sites. The arresting sites in DNA have the property of trapping a certain fraction of elongating RNA polymerases that pass through, resulting in locked ternary complexes. Cleavage of the nascent transcript by cleavage factors such as GreA or GreB allows the resumption of elongation from the new 3'terminus. GreA releases sequences of 2 to 3 nucleotides. This chain is Transcription elongation factor GreA, found in Chlorobium phaeobacteroides (strain BS1).